A 102-amino-acid polypeptide reads, in one-letter code: Cytochrome c-553 (102 aa).

The N-terminal stretch at 1–23 (MKRILVVMSICAALAFGVSAAMA) is a signal peptide. Positions 33, 36, 37, and 80 each coordinate heme c.

Post-translationally, binds 1 heme c group covalently per subunit.

Its subcellular location is the periplasm. Its function is as follows. Natural electron acceptor for a formate dehydrogenase. This Nitratidesulfovibrio vulgaris (strain DSM 19637 / Miyazaki F) (Desulfovibrio vulgaris) protein is Cytochrome c-553.